A 580-amino-acid chain; its full sequence is Adenine deaminase 2 (580 aa).

Belongs to the metallo-dependent hydrolases superfamily. Adenine deaminase family. It depends on Mn(2+) as a cofactor.

It catalyses the reaction adenine + H2O + H(+) = hypoxanthine + NH4(+). The polypeptide is Adenine deaminase 2 (Latilactobacillus sakei subsp. sakei (strain 23K) (Lactobacillus sakei subsp. sakei)).